We begin with the raw amino-acid sequence, 234 residues long: MHILIPAAGMGKRMGASHNKLRLQLLGKPLLAWTLAAVAAAEAIEWIGVIGQPEDFPIWEALLEDLNLRQPVHLITGGETRQASVFHGLQALPKTAEQVLIHDGARCLATPDLINRCAQALGTYAGLIAAVPVKDTIKIVNREGVVVQTPERDSLWAAQTPQGFRVEPLRIAHEMAVAKGWEVTDDAALFERLGYAVHIVLGEETNLKITTPSDLPLAERILQHRREQEQDTLG.

This sequence belongs to the IspD/TarI cytidylyltransferase family. IspD subfamily.

The enzyme catalyses 2-C-methyl-D-erythritol 4-phosphate + CTP + H(+) = 4-CDP-2-C-methyl-D-erythritol + diphosphate. It participates in isoprenoid biosynthesis; isopentenyl diphosphate biosynthesis via DXP pathway; isopentenyl diphosphate from 1-deoxy-D-xylulose 5-phosphate: step 2/6. Functionally, catalyzes the formation of 4-diphosphocytidyl-2-C-methyl-D-erythritol from CTP and 2-C-methyl-D-erythritol 4-phosphate (MEP). The polypeptide is 2-C-methyl-D-erythritol 4-phosphate cytidylyltransferase (Thermosynechococcus vestitus (strain NIES-2133 / IAM M-273 / BP-1)).